The chain runs to 195 residues: ATP-dependent Clp protease proteolytic subunit 2 (195 aa).

Catalysis depends on S95, which acts as the Nucleophile. The active site involves H120.

This sequence belongs to the peptidase S14 family. In terms of assembly, fourteen ClpP subunits assemble into 2 heptameric rings which stack back to back to give a disk-like structure with a central cavity, resembling the structure of eukaryotic proteasomes.

The protein resides in the cytoplasm. It catalyses the reaction Hydrolysis of proteins to small peptides in the presence of ATP and magnesium. alpha-casein is the usual test substrate. In the absence of ATP, only oligopeptides shorter than five residues are hydrolyzed (such as succinyl-Leu-Tyr-|-NHMec, and Leu-Tyr-Leu-|-Tyr-Trp, in which cleavage of the -Tyr-|-Leu- and -Tyr-|-Trp bonds also occurs).. In terms of biological role, cleaves peptides in various proteins in a process that requires ATP hydrolysis. Has a chymotrypsin-like activity. Plays a major role in the degradation of misfolded proteins. The sequence is that of ATP-dependent Clp protease proteolytic subunit 2 from Methylococcus capsulatus (strain ATCC 33009 / NCIMB 11132 / Bath).